The sequence spans 685 residues: Putative mannosyltransferase YycA (685 aa).

6 consecutive transmembrane segments (helical) span residues 6–26, 68–88, 109–129, 154–174, 176–196, and 204–224; these read FDAA…YHIW, VLWI…SVII, FGVG…IAVA, AVKQ…GLAF, MKMM…LIAS, and IGSL…WAIA. Residues 269 to 347 are disordered; the sequence is MNAAGGGNMQ…GGGGGKSVNM (79 aa). The segment covering 277–286 has biased composition (polar residues); the sequence is MQNQDNMQAP. Low complexity predominate over residues 287 to 303; the sequence is NGNGSSFSQNGNQSFGN. A compositionally biased stretch (gly residues) spans 318–343; sequence LNGGGGTPPTGGNGPGNGGPGGGGGK. The next 7 helical transmembrane spans lie at 363–383, 399–419, 422–442, 455–475, 479–499, 513–533, and 573–593; these read LSGQ…GAII, TLFW…AGFF, YYLI…WYTM, YLLP…LSAY, IGSV…LALL, IISL…PLLY, and TGEE…YIIY. Positions 652–685 are disordered; sequence TSDEYSGSSSSTNSVQGMRRGPGGESQQTLYLVE. Residues 654–665 are compositionally biased toward low complexity; that stretch reads DEYSGSSSSTNS. Residues 676–685 are compositionally biased toward polar residues; the sequence is ESQQTLYLVE.

It belongs to the glycosyltransferase 39 family.

Its subcellular location is the cell membrane. In Bacillus subtilis (strain 168), this protein is Putative mannosyltransferase YycA (yycA).